A 108-amino-acid polypeptide reads, in one-letter code: Small ribosomal subunit protein eS25x (108 aa).

Positions 1-36 are disordered; the sequence is MAPKKDKVPPPSSKPAKSGGGKQKKKKWSKGKQKEK. Residues 22 to 31 are compositionally biased toward basic residues; that stretch reads KQKKKKWSKG.

This sequence belongs to the eukaryotic ribosomal protein eS25 family.

This chain is Small ribosomal subunit protein eS25x (RPS25D), found in Arabidopsis thaliana (Mouse-ear cress).